The chain runs to 259 residues: Snake venom serine proteinase 2 (259 aa).

Residues 1–18 form the signal peptide; the sequence is MVLIRVLANLLILQLSYA. Positions 19-24 are excised as a propeptide; the sequence is QKSSEL. In terms of domain architecture, Peptidase S1 spans 25-250; that stretch reads IFGGRPCNRN…HLDWIQSIIA (226 aa). Disulfide bonds link C31-C162, C49-C65, C97-C257, C141-C211, C173-C190, and C201-C226. Catalysis depends on charge relay system residues H64 and D109. S205 functions as the Charge relay system in the catalytic mechanism.

Belongs to the peptidase S1 family. Snake venom subfamily. As to quaternary structure, monomer. Expressed by the venom gland.

It is found in the secreted. In terms of biological role, snake venom serine protease that may act in the hemostasis system of the prey. The sequence is that of Snake venom serine proteinase 2 from Crotalus adamanteus (Eastern diamondback rattlesnake).